Here is a 418-residue protein sequence, read N- to C-terminus: Tyrosine--tRNA ligase (418 aa).

Position 34 (Y34) interacts with L-tyrosine. The short motif at 39-48 is the 'HIGH' region element; it reads PTADSLHLGH. Residues Y169 and Q173 each contribute to the L-tyrosine site. The 'KMSKS' region motif lies at 229-233; that stretch reads KFGKS. K232 contacts ATP. In terms of domain architecture, S4 RNA-binding spans 352 to 418; that stretch reads LNIVELLVNA…GKKKNFVLTY (67 aa).

The protein belongs to the class-I aminoacyl-tRNA synthetase family. TyrS type 1 subfamily. As to quaternary structure, homodimer.

Its subcellular location is the cytoplasm. It carries out the reaction tRNA(Tyr) + L-tyrosine + ATP = L-tyrosyl-tRNA(Tyr) + AMP + diphosphate + H(+). Its function is as follows. Catalyzes the attachment of tyrosine to tRNA(Tyr) in a two-step reaction: tyrosine is first activated by ATP to form Tyr-AMP and then transferred to the acceptor end of tRNA(Tyr). In Streptococcus thermophilus (strain ATCC BAA-491 / LMD-9), this protein is Tyrosine--tRNA ligase.